Reading from the N-terminus, the 755-residue chain is Cellulose synthase-like protein B4 (755 aa).

2 helical membrane passes run 24–44 and 49–69; these read AVDL…ILHV and TVWI…LLIT. Residues Asp-136 and Asp-461 contribute to the active site. Helical transmembrane passes span 533–556, 569–589, 615–635, 674–694, 702–722, and 733–753; these read AYLY…LPAY, VYLG…LWEF, LFSV…VFIV, FLPG…CLVG, GSGL…LPFL, and IPFS…VLSV.

Belongs to the glycosyltransferase 2 family. Plant cellulose synthase-like B subfamily.

Its subcellular location is the golgi apparatus membrane. Functionally, thought to be a Golgi-localized beta-glycan synthase that polymerize the backbones of noncellulosic polysaccharides (hemicelluloses) of plant cell wall. In Arabidopsis thaliana (Mouse-ear cress), this protein is Cellulose synthase-like protein B4 (CSLB4).